The following is a 372-amino-acid chain: DNA replication and repair protein RecF (372 aa).

ATP is bound at residue 30–37; sequence GANGQGKT.

It belongs to the RecF family.

Its subcellular location is the cytoplasm. The RecF protein is involved in DNA metabolism; it is required for DNA replication and normal SOS inducibility. RecF binds preferentially to single-stranded, linear DNA. It also seems to bind ATP. The polypeptide is DNA replication and repair protein RecF (Heliobacterium modesticaldum (strain ATCC 51547 / Ice1)).